Here is a 388-residue protein sequence, read N- to C-terminus: L-lactate dehydrogenase (388 aa).

The FMN hydroxy acid dehydrogenase domain occupies 1–380; it reads MIISAASDYR…SADALSRVTR (380 aa). Tyr-24 serves as a coordination point for substrate. FMN contacts are provided by Ser-106 and Gln-127. Tyr-129 is a substrate binding site. Residue Thr-155 participates in FMN binding. Residue Arg-164 participates in substrate binding. Lys-251 contributes to the FMN binding site. The Proton acceptor role is filled by His-275. Arg-278 contributes to the substrate binding site. Residue 306–330 participates in FMN binding; sequence DSGIRSGLDVVRMLALGADAVLLGR.

Belongs to the FMN-dependent alpha-hydroxy acid dehydrogenase family. FMN is required as a cofactor.

It localises to the cell inner membrane. The enzyme catalyses (S)-lactate + A = pyruvate + AH2. Functionally, catalyzes the conversion of L-lactate to pyruvate. Is coupled to the respiratory chain. The polypeptide is L-lactate dehydrogenase (Xanthomonas oryzae pv. oryzae (strain MAFF 311018)).